A 3423-amino-acid chain; its full sequence is Genome polyprotein (3423 aa).

The segment at 1 to 25 is disordered; it reads MKNPKKKSGGFRIVNMLKRGVARVS. Over 1–104 the chain is Cytoplasmic; the sequence is MKNPKKKSGG…INARKEKKRR (104 aa). Residues 37-72 are hydrophobic; homodimerization of capsid protein C; sequence LLLGHGPIRMVLAILAFLRFTAIKPSLGLINRWGSV. The propeptide at 105–122 is ER anchor for capsid protein C, removed in mature form by serine protease NS3; it reads GTDTSVGIVGLLLTTAMA. A helical transmembrane segment spans residues 105 to 125; that stretch reads GTDTSVGIVGLLLTTAMAVEV. Topologically, residues 126–249 are extracellular; that stretch reads TRRGNAYYMY…YTKHLIRVEN (124 aa). An N-linked (GlcNAc...) asparagine; by host glycan is attached at asparagine 192. The chain crosses the membrane as a helical span at residues 250 to 269; sequence WIFRNPGFALAAAAIAWLLG. Residues 270-274 lie on the Cytoplasmic side of the membrane; it reads SSTSQ. Residues 275–290 traverse the membrane as a helical segment; the sequence is KVIYLVMILLIAPAYS. The Extracellular portion of the chain corresponds to 291-745; sequence IRCIGVSNRD…HQIFGAAFKS (455 aa). A Glycyl lysine isopeptide (Lys-Gly) (interchain with G-Cter in ubiquitin) cross-link involves residue lysine 328. 2 disulfides stabilise this stretch: cysteine 350/cysteine 406 and cysteine 382/cysteine 411. The tract at residues 388–401 is fusion peptide; it reads DRGWGNGCGLFGKG. Asparagine 444 carries N-linked (GlcNAc...) asparagine; by host glycosylation. Disulfide bonds link cysteine 480-cysteine 581 and cysteine 598-cysteine 629. A Glycyl lysine isopeptide (Lys-Gly) (interchain with G-Cter in ubiquitin) cross-link involves residue lysine 571. Residues 746–767 traverse the membrane as a helical segment; the sequence is LFGGMSWFSQILIGTLLVWLGL. Topologically, residues 768 to 773 are cytoplasmic; it reads NTKNGS. A helical membrane pass occupies residues 774 to 794; the sequence is ISLMCLALGGVLIFLSTAVSA. At 795–1177 the chain is on the lumenal side; sequence DVGCSVDFSK…EGLKKRMTTK (383 aa). Intrachain disulfides connect cysteine 798-cysteine 809, cysteine 849-cysteine 937, cysteine 973-cysteine 1017, cysteine 1074-cysteine 1123, cysteine 1085-cysteine 1106, and cysteine 1107-cysteine 1110. Residues asparagine 924 and asparagine 1001 are each glycosylated (N-linked (GlcNAc...) asparagine; by host). A helical transmembrane segment spans residues 1178-1198; that stretch reads IIISTSMAVLVAMILGGFSMS. Residues 1199–1220 are Cytoplasmic-facing; sequence DLAKLAILMGATFAEMNTGGDV. A helical transmembrane segment spans residues 1221-1241; that stretch reads AHLALIAAFKVRPALLVSFIF. Over 1242–1270 the chain is Lumenal; that stretch reads RANWTPRESMLLALASCLLQTAISALEGD. The chain crosses the membrane as a helical span at residues 1271 to 1291; that stretch reads LMVPINGFALAWLAIRAMVVP. Residues 1292 to 1295 are Cytoplasmic-facing; it reads RTDN. Residues 1296 to 1316 form a helical membrane-spanning segment; that stretch reads ITLAILAALTPLARGTLLVAW. The Lumenal segment spans residues 1317–1345; sequence RAGLATCGGFMLLSLKGKGSVKKNLPFVM. The helical transmembrane segment at 1346–1366 threads the bilayer; it reads ALGLTAVRLVDPINVVGLLLL. At 1367 to 1373 the chain is on the cytoplasmic side; sequence TRSGKRS. A helical membrane pass occupies residues 1374–1394; the sequence is WPPSEVLTAVGLICALAGGFA. Residues 1395–1397 lie on the Lumenal side of the membrane; sequence KAD. Residues 1398–1418 form a helical membrane-spanning segment; sequence IEMAGPMAAVGLLIVSYVVSG. Over 1419–1472 the chain is Cytoplasmic; that stretch reads KSVDMYIERAGDITWEKDAEVTGNSPRLDVALDESGDFSLVEDDGPPMREIILK. The interval 1425–1464 is interacts with and activates NS3 protease; it reads IERAGDITWEKDAEVTGNSPRLDVALDESGDFSLVEDDGP. The segment at 1429 to 1451 is disordered; it reads GDITWEKDAEVTGNSPRLDVALD. Residues 1473-1493 constitute an intramembrane region (helical); it reads VVLMAICGMNPIAIPFAAGAW. Over 1494-2170 the chain is Lumenal; the sequence is YVYVKTGKRS…KAAAAQLPET (677 aa). The Peptidase S7 domain maps to 1503–1680; the sequence is SGALWDVPAP…RREEETPVEC (178 aa). Residues histidine 1553, aspartate 1577, and serine 1637 each act as charge relay system; for serine protease NS3 activity in the active site. Residues 1683-1839 form the Helicase ATP-binding domain; the sequence is PSMLKKKQLT…DSNSPIMDTE (157 aa). The interval 1687 to 1690 is important for RNA-binding; sequence KKKQ. Residue 1696–1703 participates in ATP binding; that stretch reads LHPGAGKT. Residues 1787–1790 carry the DEAH box motif; that stretch reads DEAH. Residues 1834-2013 form the Helicase C-terminal domain; that stretch reads PIMDTEVEVP…GLIASLYRPE (180 aa). N6-acetyllysine; by host is present on lysine 1891. Residues 2171–2191 form a helical membrane-spanning segment; sequence LETIMLLGLLGTVSLGIFFVL. Over 2192-2195 the chain is Lumenal; that stretch reads MRNK. Positions 2196-2216 form an intramembrane region, helical; it reads GIGKMGFGMVTLGASAWLMWL. Residues 2217–2218 are Cytoplasmic-facing; it reads SE. A helical transmembrane segment spans residues 2219 to 2239; sequence IEPARIACVLIVVFLLLVVLI. Topologically, residues 2240-2254 are lumenal; it reads PEPEKQRSPQDNQMA. The segment at residues 2255 to 2269 is an intramembrane region (helical); it reads IIIMVAVGLLGLITA. At 2270–2307 the chain is on the lumenal side; that stretch reads NELGWLERTKSDLSHLMGRREEGATIGFSMDIDLRPAS. The helical intramembrane region spans 2308–2328; sequence AWAIYAALTTFITPAVQHAVT. The Lumenal portion of the chain corresponds to 2329 to 2344; that stretch reads TSYNNYSLMAMATQAG. A helical transmembrane segment spans residues 2345–2365; sequence VLFGMGKGMPFYAWDFGVPLL. Residues 2366–2375 are Cytoplasmic-facing; the sequence is MIGCYSQLTP. The chain crosses the membrane as a helical span at residues 2376–2396; the sequence is LTLIVAIILLVAHYMYLIPGL. The Lumenal segment spans residues 2397–2441; that stretch reads QAAAARAAQKRTAAGIMKNPVVDGIVVTDIDTMTIDPQVEKKMGQ. Residues 2442–2462 form a helical membrane-spanning segment; that stretch reads VLLIAVAVSSAILSRTAWGWG. Residues 2463–3423 lie on the Cytoplasmic side of the membrane; it reads EAGALITAAT…GEEGSTPGVL (961 aa). Residues 2521–2785 form the mRNA cap 0-1 NS5-type MT domain; it reads GGGTGETLGE…DVNLGSGTRA (265 aa). 2533-2539 contacts GTP; sequence KARLNQM. S-adenosyl-L-methionine is bound at residue serine 2576. Serine 2576 carries the post-translational modification Phosphoserine. The For 2'-O-MTase activity role is filled by lysine 2581. The interval 2597 to 2600 is SUMO-interacting motif (SIM); sequence VIDL. S-adenosyl-L-methionine contacts are provided by glycine 2606, tryptophan 2607, threonine 2624, lysine 2625, histidine 2630, glutamate 2631, aspartate 2651, valine 2652, aspartate 2666, and isoleucine 2667. The For 2'-O-MTase activity role is filled by aspartate 2666. Position 2669–2675 (2669–2675) interacts with GTP; it reads ESSSSPE. Lysine 2702 (for 2'-O-MTase activity) is an active-site residue. 2733–2735 contributes to the GTP binding site; sequence RNS. Catalysis depends on glutamate 2738, which acts as the For 2'-O-MTase activity. Residue tyrosine 2740 coordinates S-adenosyl-L-methionine. Positions 2908–2914 match the Nuclear localization signal (NLS) motif; it reads KHKRPRV. 4 residues coordinate Zn(2+): glutamate 2959, histidine 2963, cysteine 2968, and cysteine 2971. One can recognise a RdRp catalytic domain in the interval 3049 to 3199; it reads GRMYADDTAG…KPIDDRFAHA (151 aa). Residues histidine 3234, cysteine 3250, and cysteine 3369 each coordinate Zn(2+).

In the N-terminal section; belongs to the class I-like SAM-binding methyltransferase superfamily. mRNA cap 0-1 NS5-type methyltransferase family. In terms of assembly, homodimer. Interacts with host SERTAD3; this interaction promotes capsid protein C degradation. Interacts with host CAPRIN1; this interaction is probably linked to the inhibition of stress granules formation by the virus. Interacts with host G3BP1; this interaction is probably linked to the inhibition of stress granules formation by the virus. As to quaternary structure, forms heterodimers with envelope protein E in the endoplasmic reticulum and Golgi. Interacts with non-structural protein 2A. Homodimer; in the endoplasmic reticulum and Golgi. Interacts with host TYRO3, AXL and DC-SIGN proteins. Interacts with non-structural protein 2A. Interacts with host HAVCR1; this interaction likely mediates virus attachment to host cell. Interacts with host NCAM1. Interacts with host HSPA5. Interacts with Aedes aegypti SRPN25, APY and venom allergen-1 salivary proteins; the interactions do not affect Zika virus replication in human endothelial cells and keratinocytes. In terms of assembly, homodimer; Homohexamer when secreted. Interacts with host TBK1. Interacts with host USP8. Interacts with envelope protein E. As to quaternary structure, interacts with the structural protein prM/E complex, and the NS2B/NS3 protease complex. Forms a heterodimer with serine protease NS3. May form homooligomers. Interacts with human SPCS1. Interacts with non-structural protein 2A. In terms of assembly, forms a heterodimer with NS2B. Interacts with NS4B. Interacts with unphosphorylated RNA-directed RNA polymerase NS5; this interaction stimulates RNA-directed RNA polymerase NS5 guanylyltransferase activity. Interacts with non-structural protein 2A. Interacts with host SHFL; this interaction promotes NS3 degradation via a lysosome-dependent pathway. Interacts with host CEP63; this interaction disorganizes the centrosome and inhibits host innate immune response. As to quaternary structure, may interact with host ANKLE2; the interaction may cause defects in brain development, such as microcephaly. May interact with host SRPRA and SEC61G. Interacts with serine protease NS3. Interacts with NS1. In terms of assembly, homodimer. Interacts with host STAT2; this interaction inhibits the phosphorylation of the latter, and, when all viral proteins are present (polyprotein), targets STAT2 for degradation. Interacts with host TBK1 and IKBKE; these interactions lead to the inhibition of the host RIG-I signaling pathway. Interacts with host PAF1 complex; the interaction may prevent the recruitment of the host PAF1 complex to interferon-responsive genes, and thus reduces the immune response. Interacts with serine protease NS3. Interacts with host KPNA2. Interacts with host ZSWIM8; this interaction allows STAT2 binding to ZSWIM8 and subsequent proteasomal degradation leading to inhibition of interferon signaling. In terms of processing, specific enzymatic cleavages in vivo yield mature proteins. Cleavages in the lumen of endoplasmic reticulum are performed by host signal peptidase, whereas cleavages in the cytoplasmic side are performed by serine protease NS3. Signal cleavage at the 2K-4B site requires a prior NS3 protease-mediated cleavage at the 4A-2K site. Post-translationally, cleaved in post-Golgi vesicles by a host furin, releasing the mature small envelope protein M, and peptide pr. This cleavage is incomplete as up to 30% of viral particles still carry uncleaved prM. N-glycosylation plays a role in virulence in mammalian and mosquito hosts, but may have no effect on neurovirulence. In terms of processing, ubiquitination by host TRIM7 promotes virus attachment and fusion of the virus and the host endosome membrane. Post-translationally, N-glycosylated. The excreted form is glycosylated, which is required for efficient secretion of the protein from infected cells. Ubiquitination by host TRIM22 leads to proteasomal degradation. In terms of processing, acetylated by host KAT5. Acetylation modulates NS3 RNA-binding and unwinding activities and plays an important positive role for viral replication. Post-translationally, phosphorylated on serines residues. This phosphorylation may trigger NS5 nuclear localization. Sumoylated, required for regulating IFN induced interferon stimulated genes/ISGs.

The protein resides in the virion. Its subcellular location is the host nucleus. It is found in the host cytoplasm. It localises to the host perinuclear region. The protein localises to the secreted. The protein resides in the virion membrane. Its subcellular location is the host endoplasmic reticulum membrane. It is found in the host cell surface. The enzyme catalyses a 5'-end (5'-triphosphoguanosine)-ribonucleoside in mRNA + S-adenosyl-L-methionine = a 5'-end (N(7)-methyl 5'-triphosphoguanosine)-ribonucleoside in mRNA + S-adenosyl-L-homocysteine. It catalyses the reaction a 5'-end (N(7)-methyl 5'-triphosphoguanosine)-ribonucleoside in mRNA + S-adenosyl-L-methionine = a 5'-end (N(7)-methyl 5'-triphosphoguanosine)-(2'-O-methyl-ribonucleoside) in mRNA + S-adenosyl-L-homocysteine + H(+). The catalysed reaction is RNA(n) + a ribonucleoside 5'-triphosphate = RNA(n+1) + diphosphate. It carries out the reaction Selective hydrolysis of -Xaa-Xaa-|-Yaa- bonds in which each of the Xaa can be either Arg or Lys and Yaa can be either Ser or Ala.. The enzyme catalyses a ribonucleoside 5'-triphosphate + H2O = a ribonucleoside 5'-diphosphate + phosphate + H(+). It catalyses the reaction ATP + H2O = ADP + phosphate + H(+). Its function is as follows. Plays a role in virus budding by binding to the cell membrane and gathering the viral RNA into a nucleocapsid that forms the core of the mature virus particle. During virus entry, may induce genome penetration into the host cytoplasm after hemifusion induced by the surface proteins. Can migrate to the cell nucleus where it modulates host functions. Inhibits the integrated stress response (ISR) in the infected cell. In terms of biological role, inhibits RNA silencing by interfering with host Dicer. Functionally, prevents premature fusion activity of envelope proteins in trans-Golgi by binding to envelope protein E at pH 6.0. After virion release in extracellular space, gets dissociated from E dimers. Plays a role in host immune defense modulation and protection of envelope protein E during virion synthesis. PrM-E cleavage is inefficient, many virions are only partially matured and immature prM-E proteins could play a role in immune evasion. Contributes to fetal microcephaly in humans. Acts as a chaperone for envelope protein E during intracellular virion assembly by masking and inactivating envelope protein E fusion peptide. prM is the only viral peptide matured by host furin in the trans-Golgi network probably to avoid catastrophic activation of the viral fusion activity in acidic Golgi compartment prior to virion release. Its function is as follows. May play a role in virus budding. Exerts cytotoxic effects by activating a mitochondrial apoptotic pathway through M ectodomain. May display a viroporin activity. In terms of biological role, binds to host cell surface receptors and mediates fusion between viral and cellular membranes. Efficient virus attachment to cell is, at least in part, mediated by host HAVCR1 in a cell-type specific manner. In addition, host NCAM1 can also be used as entry receptor. Interaction with host HSPA5 plays an important role in the early stages of infection as well. Envelope protein is synthesized in the endoplasmic reticulum and forms a heterodimer with protein prM. The heterodimer plays a role in virion budding in the ER, and the newly formed immature particle is covered with 60 spikes composed of heterodimers between precursor prM and envelope protein E. The virion is transported to the Golgi apparatus where the low pH causes the dissociation of PrM-E heterodimers and formation of E homodimers. PrM-E cleavage is inefficient, many virions are only partially matured and immature prM-E proteins could play a role in immune evasion. Functionally, plays a role in the inhibition of host RLR-induced interferon-beta activation by targeting TANK-binding kinase 1/TBK1. In addition, recruits the host deubiquitinase USP8 to cleave 'Lys-11'-linked polyubiquitin chains from caspase-1/CASP1 thus inhibiting its proteasomal degradation. In turn, stabilized CASP1 promotes cleavage of cGAS, which inhibits its ability to recognize mitochondrial DNA release and initiate type I interferon signaling. Component of the viral RNA replication complex that recruits genomic RNA, the structural protein prM/E complex, and the NS2B/NS3 protease complex to the virion assembly site and orchestrates virus morphogenesis. Also antagonizes the host alpha/beta interferon antiviral response. May disrupt adherens junction formation and thereby impair proliferation of radial cells in the host cortex. Its function is as follows. Required cofactor for the serine protease function of NS3. In terms of biological role, displays three enzymatic activities: serine protease, NTPase and RNA helicase. NS3 serine protease, in association with NS2B, performs its autocleavage and cleaves the polyprotein at dibasic sites in the cytoplasm: C-prM, NS2A-NS2B, NS2B-NS3, NS3-NS4A, NS4A-2K and NS4B-NS5. NS3 RNA helicase binds RNA and unwinds dsRNA in the 3' to 5' direction. Leads to translation arrest when expressed ex vivo. Disrupts host centrosome organization in a CEP63-dependent manner to degrade host TBK1 and inhibits innate immune response. Inhibits the integrated stress response (ISR) in the infected cell. Functionally, regulates the ATPase activity of the NS3 helicase activity. NS4A allows NS3 helicase to conserve energy during unwinding. Cooperatively with NS4B suppresses the Akt-mTOR pathway and leads to cellular dysregulation. By inhibiting host ANKLE2 functions, may cause defects in brain development, such as microcephaly. Also antagonizes the host MDA5-mediated induction of alpha/beta interferon antiviral response. Leads to translation arrest when expressed ex vivo. Inhibits the integrated stress response (ISR) in the infected cell. Functions as a signal peptide for NS4B and is required for the interferon antagonism activity of the latter. Its function is as follows. Induces the formation of ER-derived membrane vesicles where the viral replication takes place. Also plays a role in the inhibition of host RLR-induced interferon-beta production at TANK-binding kinase 1/TBK1 level. Cooperatively with NS4A suppresses the Akt-mTOR pathway and leads to cellular dysregulation. In terms of biological role, replicates the viral (+) and (-) RNA genome, and performs the capping of genomes in the cytoplasm. Methylates viral RNA cap at guanine N-7 and ribose 2'-O positions. Once sufficient NS5 is expressed, binds to the cap-proximal structure and inhibits further translation of the viral genome. Besides its role in RNA genome replication, also prevents the establishment of a cellular antiviral state by blocking the interferon-alpha/beta (IFN-alpha/beta) signaling pathway. Mechanistically, interferes with host kinases TBK1 and IKKE upstream of interferon regulatory factor 3/IRF3 to inhibit the RIG-I pathway. Also antagonizes type I interferon signaling by targeting STAT2 for degradation by the proteasome thereby preventing activation of JAK-STAT signaling pathway. Mechanistically, acts as a scaffold protein to connect host ZSWIM8/CUL3 ligase complex and STAT2, leading to STAT2 degradation. Within the host nucleus, disrupts host SUMO1 and STAT2 co-localization with PML, resulting in PML degradation. May also reduce immune responses by preventing the recruitment of the host PAF1 complex to interferon-responsive genes. The chain is Genome polyprotein from Zika virus (isolate ZIKV/Human/Cambodia/FSS13025/2010) (ZIKV).